We begin with the raw amino-acid sequence, 117 residues long: Large ribosomal subunit protein uL18 (117 aa).

The protein belongs to the universal ribosomal protein uL18 family. As to quaternary structure, part of the 50S ribosomal subunit; part of the 5S rRNA/L5/L18/L25 subcomplex. Contacts the 5S and 23S rRNAs.

In terms of biological role, this is one of the proteins that bind and probably mediate the attachment of the 5S RNA into the large ribosomal subunit, where it forms part of the central protuberance. The chain is Large ribosomal subunit protein uL18 from Chromobacterium violaceum (strain ATCC 12472 / DSM 30191 / JCM 1249 / CCUG 213 / NBRC 12614 / NCIMB 9131 / NCTC 9757 / MK).